The sequence spans 671 residues: DNA ligase (671 aa).

Residues 32–36 (DAEYD), 81–82 (SL), and E113 contribute to the NAD(+) site. K115 serves as the catalytic N6-AMP-lysine intermediate. NAD(+)-binding residues include R136, E173, K290, and K314. Residues C408, C411, C426, and C432 each contribute to the Zn(2+) site. In terms of domain architecture, BRCT spans 593-671 (EIDSPFAGKT…ETEMLHLLGS (79 aa)).

The protein belongs to the NAD-dependent DNA ligase family. LigA subfamily. Requires Mg(2+) as cofactor. Mn(2+) is required as a cofactor.

It catalyses the reaction NAD(+) + (deoxyribonucleotide)n-3'-hydroxyl + 5'-phospho-(deoxyribonucleotide)m = (deoxyribonucleotide)n+m + AMP + beta-nicotinamide D-nucleotide.. Its function is as follows. DNA ligase that catalyzes the formation of phosphodiester linkages between 5'-phosphoryl and 3'-hydroxyl groups in double-stranded DNA using NAD as a coenzyme and as the energy source for the reaction. It is essential for DNA replication and repair of damaged DNA. The sequence is that of DNA ligase from Escherichia coli O6:K15:H31 (strain 536 / UPEC).